Here is a 1001-residue protein sequence, read N- to C-terminus: DNA topoisomerase 3-alpha (1001 aa).

One can recognise a Toprim domain in the interval 35-179; sequence KVLCVAEKND…NLQVLRARFS (145 aa). One can recognise a Topo IA-type catalytic domain in the interval 197–617; the sequence is DQRVSDAVDV…QQVQKYKQVF (421 aa). The O-(5'-phospho-DNA)-tyrosine intermediate role is filled by Tyr362. The disordered stretch occupies residues 400–424; the sequence is GGPTPRNGNKSDQAHPPIHPTKYTN. The segment at 658–685 adopts a C4-type zinc-finger fold; the sequence is CPQCNKDMVLKTKKNGGFYLSCMGFPEC. Polar residues predominate over residues 774 to 792; it reads RMDNSQHPQPADSRQTGSS. The tract at residues 774–810 is disordered; the sequence is RMDNSQHPQPADSRQTGSSKALAQTLPPPTAAGESNS. Cys813, Cys815, Cys838, Cys843, Cys897, Cys899, Cys922, and Cys930 together coordinate Zn(2+). 2 GRF-type zinc fingers span residues 813-852 and 897-939; these read CNCGQEAVLLTVRKEGPNRGRQFFKCNGGSCNFFLWADSP and CLCS…VDEN. The disordered stretch occupies residues 937–1001; sequence DENTAPGTSG…HTRPFCPQNR (65 aa). The segment covering 953 to 964 has biased composition (basic and acidic residues); it reads DRGRTLESEARS.

The protein belongs to the type IA topoisomerase family. In terms of assembly, binds ssDNA. Interacts (via N-terminal region) with BLM; the interaction is direct. Directly interacts with RMI1. Component of the RMI complex, containing at least TOP3A, RMI1 and RMI2. The RMI complex interacts with BLM. Requires Mg(2+) as cofactor. High expression is found in testis, heart, skeletal muscle and pancreas.

The protein resides in the mitochondrion matrix. The enzyme catalyses ATP-independent breakage of single-stranded DNA, followed by passage and rejoining.. In terms of biological role, releases the supercoiling and torsional tension of DNA introduced during the DNA replication and transcription by transiently cleaving and rejoining one strand of the DNA duplex. Introduces a single-strand break via transesterification at a target site in duplex DNA. The scissile phosphodiester is attacked by the catalytic tyrosine of the enzyme, resulting in the formation of a DNA-(5'-phosphotyrosyl)-enzyme intermediate and the expulsion of a 3'-OH DNA strand. The free DNA strand then undergoes passage around the unbroken strand thus removing DNA supercoils. Finally, in the religation step, the DNA 3'-OH attacks the covalent intermediate to expel the active-site tyrosine and restore the DNA phosphodiester backbone. As an essential component of the RMI complex it is involved in chromosome separation and the processing of homologous recombination intermediates to limit DNA crossover formation in cells. Has DNA decatenation activity. It is required for mtDNA decatenation and segregation after completion of replication, in a process that does not require BLM, RMI1 and RMI2. The chain is DNA topoisomerase 3-alpha (TOP3A) from Homo sapiens (Human).